A 333-amino-acid chain; its full sequence is SPbeta prophage-derived recombinase-like protein YomM (333 aa).

The Core-binding (CB) domain maps to 30–113 (EEHRNLVQEF…GVSSLNNYIE (84 aa)). The Tyr recombinase domain occupies 142–332 (YEKVKVTYDD…DFEEEKNQIF (191 aa)). Residues R180, K211, H281, and H308 contribute to the active site. Y319 (O-(3'-phospho-DNA)-tyrosine intermediate) is an active-site residue.

Belongs to the 'phage' integrase family.

This is SPbeta prophage-derived recombinase-like protein YomM (yomM) from Bacillus subtilis (strain 168).